A 128-amino-acid polypeptide reads, in one-letter code: 3-aminoacrylate deaminase RutC (128 aa).

This sequence belongs to the RutC family. As to quaternary structure, homotrimer.

The enzyme catalyses (Z)-3-aminoacrylate + H2O + H(+) = 3-oxopropanoate + NH4(+). In terms of biological role, involved in pyrimidine catabolism. Catalyzes the deamination of 3-aminoacrylate to malonic semialdehyde, a reaction that can also occur spontaneously. RutC may facilitate the reaction and modulate the metabolic fitness, rather than catalyzing essential functions. In Escherichia coli O103:H2 (strain 12009 / EHEC), this protein is 3-aminoacrylate deaminase RutC.